Reading from the N-terminus, the 509-residue chain is tRNA-2-methylthio-N(6)-dimethylallyladenosine synthase (509 aa).

Residues 1 to 15 show a composition bias toward polar residues; sequence MNEQQRLASQQANSS. Residues 1–25 are disordered; sequence MNEQQRLASQQANSSTKKEEKDYSK. Positions 16–25 are enriched in basic and acidic residues; it reads TKKEEKDYSK. The MTTase N-terminal domain occupies 66 to 184; the sequence is RKFYIRTYGC…LPYILKDAMF (119 aa). [4Fe-4S] cluster-binding residues include Cys75, Cys111, Cys145, Cys221, Cys225, and Cys228. The 231-residue stretch at 207-437 folds into the Radical SAM core domain; the sequence is RRGDIKAWVN…NTLVNTLAIE (231 aa). The TRAM domain maps to 440–503; that stretch reads SRYKGQIVEV…TWSLNGELVE (64 aa).

Belongs to the methylthiotransferase family. MiaB subfamily. As to quaternary structure, monomer. The cofactor is [4Fe-4S] cluster.

The protein resides in the cytoplasm. It catalyses the reaction N(6)-dimethylallyladenosine(37) in tRNA + (sulfur carrier)-SH + AH2 + 2 S-adenosyl-L-methionine = 2-methylsulfanyl-N(6)-dimethylallyladenosine(37) in tRNA + (sulfur carrier)-H + 5'-deoxyadenosine + L-methionine + A + S-adenosyl-L-homocysteine + 2 H(+). In terms of biological role, catalyzes the methylthiolation of N6-(dimethylallyl)adenosine (i(6)A), leading to the formation of 2-methylthio-N6-(dimethylallyl)adenosine (ms(2)i(6)A) at position 37 in tRNAs that read codons beginning with uridine. The sequence is that of tRNA-2-methylthio-N(6)-dimethylallyladenosine synthase from Bacillus cereus (strain B4264).